The primary structure comprises 634 residues: MAEEQEFTQLCKLPVQPSHPHCVNNTYRSAQHSQALLRGLLALRDSGILFDVVLVVEGRHIEAHRILLAASCDYFRGMFAGGLKEMEQEEVLIHGVSYNAMCQILHFIYTSELELSLSNVQETLVAACQLQIPEIIHFCCDFLMSWVDEENILDVYRLAELFDLSRLTEQLDTYILKNFVAFSRTDKYRQLPLEKVYSLLSSNRLEVSCETEVYEGALLYHYTLEQVQADQISLHEPPKLLETVRFPLMEAEVLQRLHDKLDPSPLRDTVANALMYHRNESLQPSLQGPHTELRSDFQCVVGFGGIHSTPSTVLSDQAKYLNPLLGEWKHFTASLAPRMSNQGIAVLNNFVYLIGGDNNVQGFRAESRCWRYDPRHNRWFQIQSLQQEHADLCVCVVGRYIYAVAGRDYHNDLNAVERYDPTTNSWAYVAPLKREVYAHAGATLEGKMYVTCGRRGEDYLKETHCYDPDSNTWHSLADGPVRRAWHGMATLLDKLYVIGGSNNDAGYRRDVHQVACYSCTSGQWSSVCPLPAGHGEPGIAVLDTRIYVLGGRSHNRGSRTGYVHIYDVEKDCWEEGPQLDNSISGLAACVLTLPRTLLLEPPRGTPDRSQADPDFASEVMSVSDWEEFDNSSED.

Alanine 2 carries the N-acetylalanine modification. The BTB domain maps to 50–117 (FDVVLVVEGR…IYTSELELSL (68 aa)). 6 Kelch repeats span residues 299–349 (CVVG…VLNN), 350–399 (FVYL…VVGR), 400–446 (YIYA…TLEG), 448–493 (MYVT…TLLD), 494–544 (KLYV…VLDT), and 545–593 (RIYV…VLTL). A Phosphothreonine modification is found at threonine 463. Tyrosine 466 bears the Phosphotyrosine mark. Residues 600–634 (EPPRGTPDRSQADPDFASEVMSVSDWEEFDNSSED) are disordered. Threonine 605 is subject to Phosphothreonine. Over residues 624-634 (DWEEFDNSSED) the composition is skewed to acidic residues.

In terms of assembly, component of the BCR(KLHL22) E3 ubiquitin ligase complex, at least composed of CUL3, KLHL22 and RBX1. Interacts with PLK1. Interacts with DEPDC5 (via DEP domain); the interaction depends on amino acid availability. Interacts with YWHAE; required for the nuclear localization of KLHL22 upon amino acid starvation.

Its subcellular location is the cytoplasm. It is found in the cytosol. The protein localises to the cytoskeleton. It localises to the microtubule organizing center. The protein resides in the centrosome. Its subcellular location is the spindle. It is found in the nucleus. The protein localises to the lysosome. The protein operates within protein modification; protein ubiquitination. Functionally, substrate-specific adapter of a BCR (BTB-CUL3-RBX1) E3 ubiquitin ligase complex required for chromosome alignment and localization of PLK1 at kinetochores. The BCR(KLHL22) ubiquitin ligase complex mediates monoubiquitination of PLK1, leading to PLK1 dissociation from phosphoreceptor proteins and subsequent removal from kinetochores, allowing silencing of the spindle assembly checkpoint (SAC) and chromosome segregation. Monoubiquitination of PLK1 does not lead to PLK1 degradation. The BCR(KLHL22) ubiquitin ligase complex is also responsible for the amino acid-stimulated 'Lys-48' polyubiquitination and proteasomal degradation of DEPDC5. Through the degradation of DEPDC5, releases the GATOR1 complex-mediated inhibition of the TORC1 pathway. It is therefore an amino acid-dependent activator within the amino acid-sensing branch of the TORC1 pathway, indirectly regulating different cellular processes including cell growth and autophagy. In Ailuropoda melanoleuca (Giant panda), this protein is Kelch-like protein 22 (KLHL22).